The chain runs to 728 residues: Methylmalonyl-CoA mutase large subunit (728 aa).

Residues Y75, M78, R82, T85, R87, Y89, and S114 each contribute to the (R)-methylmalonyl-CoA site. F117 and A139 together coordinate cob(II)alamin. (R)-methylmalonyl-CoA contacts are provided by T195 and Q197. Residues V206 and R207 each contribute to the cob(II)alamin site. (R)-methylmalonyl-CoA-binding residues include R207, H244, R283, and S285. Cob(II)alamin contacts are provided by G333, E370, A373, G609, H610, D611, R612, S655, L657, G686, and T709. The region spanning 597-728 (RPRILLAKMG…VKKLRASLDA (132 aa)) is the B12-binding domain.

Belongs to the methylmalonyl-CoA mutase family. As to quaternary structure, heterodimer of an alpha and a beta chain. Adenosylcob(III)alamin serves as cofactor.

The enzyme catalyses (R)-methylmalonyl-CoA = succinyl-CoA. Functionally, catalyzes the reversible conversion of succinyl-CoA to (R)-methylmalonyl-CoA through a radical mechanism. Is involved in the fermentation of pyruvate to propanoate that occurs in Propionibacteria. The polypeptide is Methylmalonyl-CoA mutase large subunit (mutB) (Propionibacterium freudenreichii subsp. shermanii).